Here is a 237-residue protein sequence, read N- to C-terminus: Sugar fermentation stimulation protein homolog (237 aa).

The protein belongs to the SfsA family.

In Synechocystis sp. (strain ATCC 27184 / PCC 6803 / Kazusa), this protein is Sugar fermentation stimulation protein homolog.